Consider the following 629-residue polypeptide: MNATGAGYPLASLYVGDLHPDVTEAMLYEKFSPAGPIMSIRVCRDIATRRSLGYAYINFQQPADAERALDTMNFEVIKGRPIRIMWSQRDPGLRKSGVGNVFIKNLDESIDNKALYDTFSAFGNILSCKVVCDEHGSRGYGFVHFETQEAANRAIQTMNGMLLNDRKVFVGHFKSRRERELEYGAKVMEFTNVYIKNFGEDMDDKRLREIFSAFGNTLSVKVMMDDTGRSRGFGFVNYGNHEEAQKAVSEMNGKEVNGRMIYVGRAQKRIERQGELKRKFEQIKQERINRYQGVNLYVKNLDDGIDDDRLRKEFSPYGTITSAKVMTEGGHSKGFGFVCFSSPEEATKAVTEMNGRIVSTKPLYVALAQRKEERKAILTNQYMQRLATMRAMPGPLLGSFQQPANYFLPAMPQPPNRTFYSPNPVAPVRQAPQWTSHQSRPPQYQPPAPLMRAVPPRRMSSNISTMKQASTQVPRVAPHSQRVANIGTQTAGARAQVNPSIMRTMPHYKYSCAVRNVQPIGTNTHLQQVMEPAVLMQGQEPLTASSLASAPPQEQKQMLGERLYPLIHEMHPTLAGKITGMLLEIDNSELLHMLESPESLHSKVEEAVAVLQAHQAKENSQKSAQQSLI.

RRM domains follow at residues 11 to 89, 99 to 175, 191 to 268, and 294 to 370; these read ASLY…WSQR, GNVF…HFKS, TNVY…RAQK, and VNLY…LAQR. In terms of domain architecture, PABC spans 539-616; that stretch reads QEPLTASSLA…AVAVLQAHQA (78 aa).

The protein belongs to the polyadenylate-binding protein type-1 family. Interacts with dazl in an RNA-independent manner. The C-terminus can self-associate and also interact with the C-terminus of pabpc1, independently of RNA. RRM 1 and RRM 2 interact with both eif4g1 and paip1, and the C-terminus also interacts with paip1. Prior to oocyte maturation, found in a complex with dazl and pum2 proteins and spdy1 mRNA; pum2 dissociates from the complex during maturation. Interacts with the translation termination factor sup35/erf3.

Its subcellular location is the cytoplasm. Binds and protects the poly(A) tail of mRNA with or without an AU-rich element (ARE) and prevents mRNA deadenylation. Stimulates the translation of mRNAs to which it is bound during early development. The chain is Embryonic polyadenylate-binding protein from Xenopus tropicalis (Western clawed frog).